A 174-amino-acid chain; its full sequence is Trypsin inhibitor BvTI (174 aa).

2 disulfide bridges follow: cysteine 41/cysteine 84 and cysteine 131/cysteine 138.

The protein belongs to the protease inhibitor I3 (leguminous Kunitz-type inhibitor) family.

The protein localises to the secreted. Inhibits bovine trypsin and chymotrypsin, and human plasmin, plasma kallikrein and factor XIIa. This Bauhinia variegata (Purple orchid tree) protein is Trypsin inhibitor BvTI.